The chain runs to 3003 residues: MAX gene-associated protein (3003 aa).

Residues Lys4 and Lys178 each participate in a glycyl lysine isopeptide (Lys-Gly) (interchain with G-Cter in SUMO2) cross-link. A DNA-binding region (T-box) is located at residues 84 to 260 (MWNEFHNRST…YNPFAKGFRD (177 aa)). Residues 259 to 277 (RDDGLSSKPQREGKQRNSS) are compositionally biased toward basic and acidic residues. Residues 259–290 (RDDGLSSKPQREGKQRNSSDQEGNSVSSSPAH) are disordered. A compositionally biased stretch (polar residues) spans 278–288 (DQEGNSVSSSP). Glycyl lysine isopeptide (Lys-Gly) (interchain with G-Cter in SUMO2) cross-links involve residues Lys323, Lys329, Lys348, Lys431, Lys458, Lys463, and Lys480. Ser531 bears the Phosphoserine mark. A disordered region spans residues 553–647 (ILDNSSTERI…NIPVGPGSTF (95 aa)). Lys567 is covalently cross-linked (Glycyl lysine isopeptide (Lys-Gly) (interchain with G-Cter in SUMO2)). Positions 595 to 607 (KTVTASHSASPNT) are enriched in polar residues. At Ser604 the chain carries Phosphoserine. Glycyl lysine isopeptide (Lys-Gly) (interchain with G-Cter in SUMO2) cross-links involve residues Lys610, Lys651, Lys782, Lys788, Lys814, and Lys823. The span at 610-621 (KRGRPRKLRLSK) shows a compositional bias: basic residues. Position 848 is a phosphoserine (Ser848). A compositionally biased stretch (polar residues) spans 871 to 913 (KQSTISPSTSHSVKPQSVTTASRKTKAQNKQTTLSGRTKSSYK). Disordered regions lie at residues 871-946 (KQST…TSDN) and 967-987 (LRQA…GLSK). Ser921 carries the post-translational modification Phosphoserine. A Glycyl lysine isopeptide (Lys-Gly) (interchain with G-Cter in SUMO2) cross-link involves residue Lys925. Residues 937 to 946 (KNSLSSTSDN) show a composition bias toward polar residues. Residues 969–978 (QAQQQHLQQQ) are compositionally biased toward low complexity. Residues Lys987 and Lys1088 each participate in a glycyl lysine isopeptide (Lys-Gly) (interchain with G-Cter in SUMO2) cross-link. Positions 1111 to 1130 (LGEEGREGGGVREDEEQLKE) are disordered. Residues 1113-1122 (EEGREGGGVR) are compositionally biased toward basic and acidic residues. Glycyl lysine isopeptide (Lys-Gly) (interchain with G-Cter in SUMO2) cross-links involve residues Lys1136, Lys1158, Lys1194, and Lys1202. Disordered stretches follow at residues 1186-1215 (QPDL…NPVI), 1246-1277 (QRQL…TKEL), 1297-1323 (SQEK…RSPG), and 1376-1424 (RGEK…DISP). 2 stretches are compositionally biased toward low complexity: residues 1248–1269 (QLSP…YSSP) and 1303–1315 (KSSC…SSTS). Phosphoserine occurs at positions 1423 and 1450. Glycyl lysine isopeptide (Lys-Gly) (interchain with G-Cter in SUMO2) cross-links involve residues Lys1454 and Lys1495. 6 disordered regions span residues 1476 to 1508 (AKVA…RSGK), 1722 to 1746 (PPVS…SNNV), 1856 to 1885 (ISPP…PVGT), 1920 to 1954 (IKKE…KALD), 1964 to 1983 (SGII…GGDL), and 1988 to 2038 (TLRE…AGSK). Composition is skewed to polar residues over residues 1488-1507 (LPST…NRSG), 1735-1746 (PVTTPQISSNNV), and 1859-1880 (PETQ…STGG). Glycyl lysine isopeptide (Lys-Gly) (interchain with G-Cter in SUMO2) cross-links involve residues Lys1937 and Lys1944. Over residues 1964-1976 (SGIIASENTSNNS) the composition is skewed to polar residues. Glycyl lysine isopeptide (Lys-Gly) (interchain with G-Cter in SUMO2) cross-links involve residues Lys2060 and Lys2084. The tract at residues 2087-2110 (LSGNQVKEQQSNSQAEAKKDCEDS) is disordered. The segment covering 2088 to 2101 (SGNQVKEQQSNSQA) has biased composition (polar residues). Residues Lys2104, Lys2152, and Lys2179 each participate in a glycyl lysine isopeptide (Lys-Gly) (interchain with G-Cter in SUMO2) cross-link. Arg2206 is modified (omega-N-methylarginine). The disordered stretch occupies residues 2207-2255 (GSRHFQGHLLLPREQMKPKQQTKDGRSSAADFTVLDLEDEDEEDEKTDD). Residues 2220–2232 (EQMKPKQQTKDGR) are compositionally biased toward basic and acidic residues. Residue Lys2225 forms a Glycyl lysine isopeptide (Lys-Gly) (interchain with G-Cter in SUMO2) linkage. Acidic residues predominate over residues 2242-2255 (DLEDEDEEDEKTDD). Glycyl lysine isopeptide (Lys-Gly) (interchain with G-Cter in SUMO2) cross-links involve residues Lys2317, Lys2352, Lys2396, and Lys2471. The bHLH domain occupies 2362–2413 (YYRRTHTANERRRRGEMRDLFEKLKITLGLLHSSKVSKSLILNRAFSEIQGL). Ser2480 carries the phosphoserine modification. A disordered region spans residues 2515–2534 (KRDQATENASPSDTPHSSAN). Residues 2520-2534 (TENASPSDTPHSSAN) show a composition bias toward polar residues. Glycyl lysine isopeptide (Lys-Gly) (interchain with G-Cter in SUMO2) cross-links involve residues Lys2568 and Lys2618. Over residues 2629 to 2651 (SEASSLKDTERISSRGNHRDSRK) the composition is skewed to basic and acidic residues. Positions 2629-2654 (SEASSLKDTERISSRGNHRDSRKALG) are disordered. Lys2724 is covalently cross-linked (Glycyl lysine isopeptide (Lys-Gly) (interchain with G-Cter in SUMO2)). Phosphoserine occurs at positions 2849 and 2860. The tract at residues 2877–2917 (LVSHRKSSDGGQSTSGLPAEPESVSSPPILHMKTGPENSNT) is disordered. Lys2979 is covalently cross-linked (Glycyl lysine isopeptide (Lys-Gly) (interchain with G-Cter in SUMO2)).

As to quaternary structure, component of some MLL1/MLL complex, at least composed of the core components KMT2A/MLL1, ASH2L, HCFC1/HCF1, WDR5 and RBBP5, as well as the facultative components BACC1, CHD8, E2F6, HSP70, INO80C, KANSL1, LAS1L, MAX, MCRS1, MGA, MYST1/MOF, PELP1, PHF20, PRP31, RING2, RUVB1/TIP49A, RUVB2/TIP49B, SENP3, TAF1, TAF4, TAF6, TAF7, TAF9 and TEX10. Interacts with ZMYND11. Interacts with MAX. Requires heterodimerization with MAX for E-box binding. Highly expressed in germ cells and granulosa cells.

It is found in the nucleus. Its function is as follows. Functions as a dual-specificity transcription factor, regulating the expression of both MAX-network and T-box family target genes. Functions as a repressor or an activator. Binds to 5'-AATTTCACACCTAGGTGTGAAATT-3' core sequence and seems to regulate MYC-MAX target genes. Suppresses transcriptional activation by MYC and inhibits MYC-dependent cell transformation. Function activated by heterodimerization with MAX. This heterodimerization serves the dual function of both generating an E-box-binding heterodimer and simultaneously blocking interaction of a corepressor. This is MAX gene-associated protein from Mus musculus (Mouse).